Reading from the N-terminus, the 752-residue chain is Putative xanthine dehydrogenase molybdenum-binding subunit XdhA (752 aa).

The Mo-molybdopterin site is built by Gln206, Phe237, Arg350, and Ala516.

It belongs to the xanthine dehydrogenase family. Heterotrimer of XdhA, XdhB and XdhC. Mo-molybdopterin is required as a cofactor.

The enzyme catalyses xanthine + NAD(+) + H2O = urate + NADH + H(+). It carries out the reaction hypoxanthine + NAD(+) + H2O = xanthine + NADH + H(+). The protein operates within purine metabolism; hypoxanthine degradation; urate from hypoxanthine: step 1/2. Its pathway is purine metabolism; hypoxanthine degradation; urate from hypoxanthine: step 2/2. Presumed to be a dehydrogenase, but possibly an oxidase. Participates in limited purine salvage (requires aspartate) but does not support aerobic growth on purines as the sole carbon source (purine catabolism). Deletion results in increased adenine sensitivity, suggesting that this protein contributes to the conversion of adenine to guanine nucleotides during purine salvage. In Escherichia coli (strain K12), this protein is Putative xanthine dehydrogenase molybdenum-binding subunit XdhA (xdhA).